The sequence spans 217 residues: Probable GTP-binding protein EngB (217 aa).

The EngB-type G domain occupies 37–214 (AGIEVAFAGR…RAAMIRLLDE (178 aa)). Residues 45–52 (GRSNVGKS), 72–76 (GRTQE), 92–95 (DMPG), 159–162 (TKAD), and 193–195 (TSS) each bind GTP. Mg(2+)-binding residues include S52 and T74.

This sequence belongs to the TRAFAC class TrmE-Era-EngA-EngB-Septin-like GTPase superfamily. EngB GTPase family. Requires Mg(2+) as cofactor.

In terms of biological role, necessary for normal cell division and for the maintenance of normal septation. The chain is Probable GTP-binding protein EngB from Rhodopseudomonas palustris (strain BisB5).